A 390-amino-acid polypeptide reads, in one-letter code: 5-hydroxytryptamine receptor 1B (390 aa).

The Extracellular portion of the chain corresponds to Met1–Leu46. 2 N-linked (GlcNAc...) asparagine glycosylation sites follow: Asn24 and Asn32. The helical transmembrane segment at Pro47–Ala72 threads the bilayer. The Cytoplasmic portion of the chain corresponds to Thr73 to Tyr86. The chain crosses the membrane as a helical span at residues Leu87 to Val111. Topologically, residues Thr112–Gln119 are extracellular. The helical transmembrane segment at Val120–Leu145 threads the bilayer. Cys122 and Cys199 form a disulfide bridge. The ergotamine site is built by Asp129 and Thr134. Residues Asp146–Tyr148 carry the DRY motif; important for ligand-induced conformation changes and signaling motif. The Cytoplasmic segment spans residues Asp146–Arg165. The helical transmembrane segment at Ala166–Pro184 threads the bilayer. The Extracellular segment spans residues Phe185–His205. An ergotamine-binding site is contributed by Val201. A helical membrane pass occupies residues Ile206–Gly229. Topologically, residues Arg230–Thr315 are cytoplasmic. Residues Asp259–Ser272 show a composition bias toward polar residues. Residues Asp259–Ser281 form a disordered region. The chain crosses the membrane as a helical span at residues Leu316–Met337. Residues Pro338–His347 lie on the Extracellular side of the membrane. A helical membrane pass occupies residues Leu348 to Thr370. Residues Asn365–Tyr369 carry the NPxxY motif; important for ligand-induced conformation changes and signaling motif. Residues Met371–Ser390 lie on the Cytoplasmic side of the membrane. A lipid anchor (S-palmitoyl cysteine) is attached at Cys388.

Belongs to the G-protein coupled receptor 1 family. Homodimer. Heterodimer with HTR1D. Post-translationally, phosphorylated. Desensitization of the receptor may be mediated by its phosphorylation. In terms of processing, palmitoylated.

The protein resides in the cell membrane. G-protein coupled receptor for 5-hydroxytryptamine (serotonin). Also functions as a receptor for ergot alkaloid derivatives, various anxiolytic and antidepressant drugs and other psychoactive substances, such as lysergic acid diethylamide (LSD). Ligand binding causes a conformation change that triggers signaling via guanine nucleotide-binding proteins (G proteins) and modulates the activity of downstream effectors, such as adenylate cyclase. HTR1B is coupled to G(i)/G(o) G alpha proteins and mediates inhibitory neurotransmission by inhibiting adenylate cyclase activity. Arrestin family members inhibit signaling via G proteins and mediate activation of alternative signaling pathways. Regulates the release of 5-hydroxytryptamine, dopamine and acetylcholine in the brain, and thereby affects neural activity, nociceptive processing, pain perception, mood and behavior. Besides, plays a role in vasoconstriction of cerebral arteries. In Gorilla gorilla gorilla (Western lowland gorilla), this protein is 5-hydroxytryptamine receptor 1B (HTR1B).